We begin with the raw amino-acid sequence, 735 residues long: Transcription initiation factor IIF subunit alpha (735 aa).

Disordered regions lie at residues 1–68 (MSRR…EYAE), 165–263 (EYKK…TANL), 297–323 (NEPE…AKRG), 446–465 (KAVA…NSEV), 471–606 (EEFA…HKEP), and 631–674 (PEGE…EETP). A compositionally biased stretch (low complexity) spans 33 to 54 (RMRMGQNGSNSSSPGVPNGDNS). 2 stretches are compositionally biased toward basic and acidic residues: residues 59-68 (VKKDDPEYAE) and 165-174 (EYKKKAEQER). Positions 175–219 (STPNSGGMNKSGTVSLNNTVKDGSQTPTVDSVTKDNTANGVNSSI) are enriched in polar residues. A Phosphoserine modification is found at Ser-198. A Phosphothreonine modification is found at Thr-200. Residues 220–238 (PTVTGSSVPPASPTTVSAV) show a composition bias toward low complexity. Polar residues predominate over residues 239–263 (ESNGLSNGSTSAANGLDGNASTANL). Composition is skewed to acidic residues over residues 453–465 (AMDE…NSEV) and 471–480 (EEFADDEEAP). The segment covering 487-500 (QENKESEQRIKKEM) has biased composition (basic and acidic residues). Residues 513–522 (APSENEEDEL) are compositionally biased toward acidic residues. Ser-515 is modified (phosphoserine). A compositionally biased stretch (basic and acidic residues) spans 523 to 536 (FGEKKIDEDGERIK). Phosphoserine occurs at positions 560, 562, and 571. Residues 564 to 583 (IENKENESPVKKEEDSDTLS) show a composition bias toward basic and acidic residues. Positions 584–595 (KSKRSSPKKQQK) are enriched in basic residues. The segment covering 636–654 (NPQTTKAVDSSNNASNTVP) has biased composition (polar residues). Ser-655 carries the post-translational modification Phosphoserine.

This sequence belongs to the TFIIF alpha subunit family. TFIIF is composed of three different subunits: TFG1/RAP74, TFG2/RAP30 and TAF14. Phosphorylated on Ser and other residues by TAF1 and casein kinase II-like kinases.

The protein resides in the nucleus. In terms of biological role, TFIIF is a general transcription initiation factor that binds to RNA polymerase II. Its functions include the recruitment of RNA polymerase II to the promoter bound DNA-TBP-TFIIB complex, decreasing the affinity of RNA polymerase II for non-specific DNA, allowing for the subsequent recruitment of TFIIE and TFIIH, and facilitating RNA polymerase II elongation. In Saccharomyces cerevisiae (strain ATCC 204508 / S288c) (Baker's yeast), this protein is Transcription initiation factor IIF subunit alpha (TFG1).